Here is a 241-residue protein sequence, read N- to C-terminus: Peroxisomal membrane protein 11C (241 aa).

At 1–122 the chain is on the cytoplasmic side; sequence MALLNRLASA…ADAKVLRVDS (122 aa). A helical membrane pass occupies residues 123-149; that stretch reads AWWWTLNTALWTLSLLLGAVKALWTML. Residues 150–211 lie on the Lumenal side of the membrane; that stretch reads KLRQKLRSPT…GVLWAGRFPP (62 aa). A helical transmembrane segment spans residues 212 to 227; the sequence is WLVGLMGTISSILSTC. Residues 228 to 241 lie on the Cytoplasmic side of the membrane; the sequence is QAVRAGRQAEADSP.

Belongs to the peroxin-11 family. As to quaternary structure, homodimer. Heterodimer with either PEX11A or PEX11B. Interacts with FIS1. Expressed in liver and at much lower levels in heart, kidney and testis.

Its subcellular location is the peroxisome membrane. Promotes membrane protrusion and elongation on the peroxisomal surface. The sequence is that of Peroxisomal membrane protein 11C (Pex11g) from Mus musculus (Mouse).